Consider the following 311-residue polypeptide: Olfactory receptor 1N1 (311 aa).

Over Met1 to Gln23 the chain is Extracellular. Residue Asn3 is glycosylated (N-linked (GlcNAc...) asparagine). Residues Ser24–Ile47 form a helical membrane-spanning segment. The Cytoplasmic segment spans residues Gly48–Thr55. Residues Pro56–Thr77 traverse the membrane as a helical segment. Residues Lys78–Gln98 lie on the Extracellular side of the membrane. Cys95 and Cys187 are joined by a disulfide. Residues Met99–Tyr118 traverse the membrane as a helical segment. Over Asp119–Gln137 the chain is Cytoplasmic. Residues Val138–Thr156 traverse the membrane as a helical segment. Residues His157–Glu194 lie on the Extracellular side of the membrane. The helical transmembrane segment at Met195–Ile217 threads the bilayer. The Cytoplasmic segment spans residues His218–Lys234. The chain crosses the membrane as a helical span at residues Ala235–Tyr257. At Leu258–Ile270 the chain is on the extracellular side. The chain crosses the membrane as a helical span at residues Ala271–Leu290. Residues Arg291–Ser311 lie on the Cytoplasmic side of the membrane.

The protein belongs to the G-protein coupled receptor 1 family.

Its subcellular location is the cell membrane. Functionally, odorant receptor. This chain is Olfactory receptor 1N1 (OR1N1), found in Homo sapiens (Human).